We begin with the raw amino-acid sequence, 188 residues long: Urease accessory protein UreE (188 aa).

Residues 142-174 (AYQSQAGAGHHHHHDHDHGHSHDHSHTHSHADS) are disordered. Residues 157-172 (HDHGHSHDHSHTHSHA) are compositionally biased toward basic and acidic residues.

This sequence belongs to the UreE family.

It localises to the cytoplasm. Functionally, involved in urease metallocenter assembly. Binds nickel. Probably functions as a nickel donor during metallocenter assembly. The protein is Urease accessory protein UreE of Tolumonas auensis (strain DSM 9187 / NBRC 110442 / TA 4).